A 453-amino-acid polypeptide reads, in one-letter code: tRNA modification GTPase MnmE (453 aa).

(6S)-5-formyl-5,6,7,8-tetrahydrofolate is bound by residues Arg-22, Glu-79, and Lys-119. Residues Gly-215 to Gly-376 form the TrmE-type G domain. Asn-225 is a K(+) binding site. Residues Asn-225–Ser-230, Thr-244–Thr-250, Asp-269–Gly-272, and Asn-334–Asp-337 contribute to the GTP site. Ser-229 contacts Mg(2+). Residues Thr-244, Ile-246, and Thr-249 each contribute to the K(+) site. Residue Thr-250 coordinates Mg(2+). Lys-453 is a binding site for (6S)-5-formyl-5,6,7,8-tetrahydrofolate.

Belongs to the TRAFAC class TrmE-Era-EngA-EngB-Septin-like GTPase superfamily. TrmE GTPase family. As to quaternary structure, homodimer. Heterotetramer of two MnmE and two MnmG subunits. K(+) is required as a cofactor.

The protein localises to the cytoplasm. Its function is as follows. Exhibits a very high intrinsic GTPase hydrolysis rate. Involved in the addition of a carboxymethylaminomethyl (cmnm) group at the wobble position (U34) of certain tRNAs, forming tRNA-cmnm(5)s(2)U34. The sequence is that of tRNA modification GTPase MnmE from Vibrio parahaemolyticus serotype O3:K6 (strain RIMD 2210633).